Here is a 62-residue protein sequence, read N- to C-terminus: Conotoxin Lt5.5 (62 aa).

Residues Met-1 to Ala-22 form the signal peptide. The propeptide occupies Gln-23–Asn-48.

It belongs to the conotoxin T superfamily. Contains 2 disulfide bonds that can be either 'C1-C3, C2-C4' or 'C1-C4, C2-C3', since these disulfide connectivities have been observed for conotoxins with cysteine framework V (for examples, see AC P0DQQ7 and AC P81755). In terms of tissue distribution, expressed by the venom duct.

It is found in the secreted. The chain is Conotoxin Lt5.5 from Conus litteratus (Lettered cone).